We begin with the raw amino-acid sequence, 268 residues long: MASSDVFVAAARKCLRVGKKRFSATVSLNLATQVLAVDLGLKPALLYDSNTASAEQVQQYLNSLQAAQLVSKSLQTLVISENSLIVNPSLTIANLEALLLRRTVTVVDVCHSLEQPAITELQWGAIRDMIQALLAHIRQFGQHSAMRNVPHRIEKRHCETWNLCTLFGILLGYPSTYWFDQSRSFENCLAMSPLVVTKAVASWQGGDSGVEGHRCCLYSFSTPEMLQADTQSVMASWTTQLQERFQQQKVLSGLSVTRSTVTLPSVAL.

It belongs to the UPF0739 family.

The protein is UPF0739 protein C1orf74 homolog of Salmo salar (Atlantic salmon).